The primary structure comprises 1203 residues: Regulator of telomere elongation helicase 1 (1203 aa).

In terms of domain architecture, Helicase ATP-binding spans 7 to 296; the sequence is NGVTVDFPFQ…ARVTQQGELQ (290 aa). 42-49 contributes to the ATP binding site; it reads SPTGTGKT. Residues Cys-145, Cys-163, Cys-172, and Cys-207 each coordinate [4Fe-4S] cluster. A Nuclear localization signal motif is present at residues 151 to 167; that stretch reads KKQESNHMQISLCRKKV. A DEAH box motif is present at residues 250-253; that stretch reads DEAH. The Nuclear localization signal motif lies at 871-877; the sequence is QKGGRKK. 2 disordered regions span residues 998-1020 and 1120-1203; these read QLDPGQHLNHGQPHLSAHPTSKG and TTGK…RSKQ. Positions 1123 to 1134 are enriched in basic and acidic residues; the sequence is KDLELEGPRDES. The PIP-box signature appears at 1160–1167; sequence QSKISSFF. Residues 1169–1181 are compositionally biased toward basic and acidic residues; it reads QRPDESVRSDDTT.

It belongs to the helicase family. RAD3/XPD subfamily. In terms of assembly, interacts with TERF1. Interacts (via PIP-box) with PCNA; the interaction is direct and essential for suppressing telomere fragility. Interacts with MMS19; the interaction mediates the association of RTEL1 with the cytosolic iron-sulfur protein assembly (CIA) complex.

The protein localises to the nucleus. It catalyses the reaction ATP + H2O = ADP + phosphate + H(+). Functionally, a probable ATP-dependent DNA helicase implicated in telomere-length regulation, DNA repair and the maintenance of genomic stability. Acts as an anti-recombinase to counteract toxic recombination and limit crossover during meiosis. Regulates meiotic recombination and crossover homeostasis by physically dissociating strand invasion events and thereby promotes noncrossover repair by meiotic synthesis dependent strand annealing (SDSA) as well as disassembly of D loop recombination intermediates. Also disassembles T loops and prevents telomere fragility by counteracting telomeric G4-DNA structures, which together ensure the dynamics and stability of the telomere. This chain is Regulator of telomere elongation helicase 1 (Rtel1), found in Mus spretus (Western Mediterranean mouse).